A 306-amino-acid polypeptide reads, in one-letter code: Elongation factor Ts (306 aa).

The interval 80 to 83 (TDFV) is involved in Mg(2+) ion dislocation from EF-Tu.

It belongs to the EF-Ts family.

It is found in the cytoplasm. Its function is as follows. Associates with the EF-Tu.GDP complex and induces the exchange of GDP to GTP. It remains bound to the aminoacyl-tRNA.EF-Tu.GTP complex up to the GTP hydrolysis stage on the ribosome. The chain is Elongation factor Ts from Methylorubrum extorquens (strain CM4 / NCIMB 13688) (Methylobacterium extorquens).